The primary structure comprises 481 residues: Lincomycin resistance protein (481 aa).

A run of 14 helical transmembrane segments spans residues 30-50 (WVTL…VTVV), 67-87 (QLTW…MVGG), 99-119 (LLFG…APNL), 127-147 (FGQG…IACS), 162-182 (VASV…QLFS), 185-205 (WIFL…LLLV), 215-235 (PVDL…IFGV), 245-265 (LPLA…FVAV), 285-305 (LVAN…FFLL), 318-338 (IEAG…CVLV), 340-360 (GLIE…LAGP), 374-394 (LLTS…GLVA), 421-441 (LGGA…HLGG), and 446-466 (FTVA…AVLA).

It belongs to the major facilitator superfamily. TCR/Tet family.

The protein resides in the cell membrane. Its function is as follows. Proton-dependent transporter. May mediate the efflux of lincomycin. The chain is Lincomycin resistance protein (lmrA) from Streptomyces lincolnensis.